The sequence spans 249 residues: Small ribosomal subunit protein eS6 (249 aa).

Lys14 participates in a covalent cross-link: Glycyl lysine isopeptide (Lys-Gly) (interchain with G-Cter in SUMO2). Glu35 is subject to ADP-ribosyl glutamic acid. Arg137 carries the post-translational modification (3R)-3-hydroxyarginine. Ser148 bears the Phosphoserine mark. Lys211 is modified (N6-acetyllysine). A compositionally biased stretch (basic and acidic residues) spans 217 to 229; that stretch reads MKEAKEKRQEQIA. The segment at 217-249 is disordered; that stretch reads MKEAKEKRQEQIAKRRRLSSLRASTSKSESSQK. 6 positions are modified to phosphoserine: Ser235, Ser236, Ser240, Ser242, Ser244, and Ser247. Residues 236 to 249 are compositionally biased toward low complexity; that stretch reads SLRASTSKSESSQK.

Belongs to the eukaryotic ribosomal protein eS6 family. In terms of assembly, component of the small ribosomal subunit. Part of the small subunit (SSU) processome, composed of more than 70 proteins and the RNA chaperone small nucleolar RNA (snoRNA) U3. In terms of processing, ribosomal protein S6 is the major substrate of protein kinases in eukaryote ribosomes. The phosphorylation is stimulated by growth factors, tumor promoting agents, and mitogens. It is dephosphorylated at growth arrest. Phosphorylated at Ser-235 and Ser-236 by RPS6KA1 and RPS6KA3; phosphorylation at these sites facilitates the assembly of the pre-initiation complex. Post-translationally, specifically hydroxylated (with R stereochemistry) at C-3 of Arg-137 by KDM8. Mono-ADP-ribosylation at Glu-35 by PARP16 inhibits polysome assembly and mRNA loading, thereby inhibiting protein translation.

The protein localises to the cytoplasm. Its subcellular location is the nucleus. The protein resides in the nucleolus. Component of the 40S small ribosomal subunit. Plays an important role in controlling cell growth and proliferation through the selective translation of particular classes of mRNA. Part of the small subunit (SSU) processome, first precursor of the small eukaryotic ribosomal subunit. During the assembly of the SSU processome in the nucleolus, many ribosome biogenesis factors, an RNA chaperone and ribosomal proteins associate with the nascent pre-rRNA and work in concert to generate RNA folding, modifications, rearrangements and cleavage as well as targeted degradation of pre-ribosomal RNA by the RNA exosome. The sequence is that of Small ribosomal subunit protein eS6 (RPS6) from Oryctolagus cuniculus (Rabbit).